The sequence spans 517 residues: Probable protein phosphatase 2C 20 (517 aa).

The tract at residues 1 to 59 is disordered; that stretch reads MWVMQGERRRARAPWGPPDTGGALLERWISRERRSDSRDASGSAKQRSAMGNSLPVESK. Over residues 28–39 the composition is skewed to basic and acidic residues; that stretch reads WISRERRSDSRD. The region spanning 70–373 is the PPM-type phosphatase domain; sequence KYVVSSMQGW…DNTTVILVLF (304 aa). The Mn(2+) site is built by D105, G106, E323, and D364. The tract at residues 380-517 is disordered; the sequence is AVPPVDTDTD…PPHDDTYHRW (138 aa). Polar residues predominate over residues 402–414; that stretch reads GSNNATASDNNDP. The span at 438 to 455 shows a compositional bias: low complexity; sequence DATATAVGSSSTTAVAAD. Residues 499–517 show a composition bias toward basic and acidic residues; it reads LPRSNPDKSPPHDDTYHRW.

The protein belongs to the PP2C family. Mg(2+) is required as a cofactor. The cofactor is Mn(2+).

It catalyses the reaction O-phospho-L-seryl-[protein] + H2O = L-seryl-[protein] + phosphate. The catalysed reaction is O-phospho-L-threonyl-[protein] + H2O = L-threonyl-[protein] + phosphate. This is Probable protein phosphatase 2C 20 from Oryza sativa subsp. japonica (Rice).